Here is an 85-residue protein sequence, read N- to C-terminus: SAPANAVSADDATAIALKYNQDATKSERVSAARPGLPPEEQHCANCQFMQADAAGATDEWKGCQLFPGKLINVNGWCASWTLKAG.

Cysteine 43, cysteine 46, cysteine 63, and cysteine 77 together coordinate [4Fe-4S] cluster.

Belongs to the high-potential iron-sulfur protein (HiPIP) family. Homodimer.

The protein localises to the periplasm. Functionally, specific class of high-redox-potential 4Fe-4S ferredoxins. Functions in anaerobic electron transport in most purple and in some other photosynthetic bacteria and in at least one genus (Paracoccus) of halophilic, denitrifying bacteria. The polypeptide is High-potential iron-sulfur protein (Allochromatium warmingii (Chromatium warmingii)).